A 201-amino-acid polypeptide reads, in one-letter code: Protease (201 aa).

Residues His53, Asp70, and Cys121 contribute to the active site.

Belongs to the peptidase C5 family. Interacts with protease cofactor pVI-C; this interaction is necessary for protease activation.

The protein resides in the virion. Its subcellular location is the host nucleus. It catalyses the reaction Cleaves proteins of the adenovirus and its host cell at two consensus sites: -Yaa-Xaa-Gly-Gly-|-Xaa- and -Yaa-Xaa-Gly-Xaa-|-Gly- (in which Yaa is Met, Ile or Leu, and Xaa is any amino acid).. With respect to regulation, requires DNA and protease cofactor for maximal activation. Inside nascent virions, becomes partially activated by binding to the viral DNA, allowing it to cleave the cofactor that binds to the protease and fully activates it. Actin, like the viral protease cofactor, seems to act as a cofactor in the cleavage of cytokeratin 18 and of actin itself. In terms of biological role, cleaves viral precursor proteins (pTP, pIIIa, pVI, pVII, pVIII, and pX) inside newly assembled particles giving rise to mature virions. Protease complexed to its cofactor slides along the viral DNA to specifically locate and cleave the viral precursors. Mature virions have a weakened organization compared to the unmature virions, thereby facilitating subsequent uncoating. Without maturation, the particle lacks infectivity and is unable to uncoat. Late in adenovirus infection, in the cytoplasm, may participate in the cytoskeleton destruction. Cleaves host cell cytoskeletal keratins K7 and K18. This is Protease from Equine adenovirus B serotype 2 (EAdV-2).